A 122-amino-acid polypeptide reads, in one-letter code: Large ribosomal subunit protein uL14c (122 aa).

Belongs to the universal ribosomal protein uL14 family. In terms of assembly, part of the 50S ribosomal subunit.

Its subcellular location is the plastid. The protein resides in the chloroplast. Its function is as follows. Binds to 23S rRNA. The sequence is that of Large ribosomal subunit protein uL14c from Carica papaya (Papaya).